The sequence spans 98 residues: MKTLVLVAVLGVASLYLLSSASEVQQLSPAEEEFRAFVSTFGGLFETEERGVDSEDCRAMFGGCGEDNDCCLHLGCKTTKLPPFANPYCAWDGTTGRK.

An N-terminal signal peptide occupies residues 1 to 21 (MKTLVLVAVLGVASLYLLSSA). Positions 22–50 (SEVQQLSPAEEEFRAFVSTFGGLFETEER) are excised as a propeptide. 3 disulfides stabilise this stretch: Cys57–Cys71, Cys64–Cys76, and Cys70–Cys89.

Belongs to the neurotoxin 10 (Hwtx-1) family. 27 (ICK-3) subfamily. Expressed by the venom gland.

It is found in the secreted. In terms of biological role, ion channel inhibitor. This Trittame loki (Brush-footed trapdoor spider) protein is U10-barytoxin-Tl1a.